A 275-amino-acid polypeptide reads, in one-letter code: 4-deoxy-L-threo-5-hexosulose-uronate ketol-isomerase (275 aa).

Zn(2+)-binding residues include H193, H195, E200, and H242.

This sequence belongs to the KduI family. The cofactor is Zn(2+).

It carries out the reaction 5-dehydro-4-deoxy-D-glucuronate = 3-deoxy-D-glycero-2,5-hexodiulosonate. It functions in the pathway glycan metabolism; pectin degradation; 2-dehydro-3-deoxy-D-gluconate from pectin: step 4/5. Its function is as follows. Catalyzes the isomerization of 5-dehydro-4-deoxy-D-glucuronate to 3-deoxy-D-glycero-2,5-hexodiulosonate. This chain is 4-deoxy-L-threo-5-hexosulose-uronate ketol-isomerase, found in Bacillus pumilus (strain SAFR-032).